The following is a 991-amino-acid chain: UPF0182 protein RHA1_ro08670 (991 aa).

A run of 7 helical transmembrane segments spans residues 16–36 (VMIMVTVALIALLVIGPRLVV), 61–81 (LILFTAVTLLVGAVIFAAVVW), 115–135 (FTVGIALLLALPFGLHAQASW), 170–190 (LILAWLFIAVFLALLIGLGTH), 214–234 (VQLAVFAGTFIALKAASYWLD), 263–283 (RLIMVAIAVLCAVAFFAAIAV), and 291–311 (MATALLVLSAILVGGIYPALI). The tract at residues 902 to 940 (TGAVATAPGGDATTPPPTGGQPPAPPPPGAPPAPPPATS) is disordered. The span at 903–914 (GAVATAPGGDAT) shows a compositional bias: low complexity. The segment covering 915–938 (TPPPTGGQPPAPPPPGAPPAPPPA) has biased composition (pro residues).

This sequence belongs to the UPF0182 family.

It localises to the cell membrane. The sequence is that of UPF0182 protein RHA1_ro08670 from Rhodococcus jostii (strain RHA1).